A 461-amino-acid polypeptide reads, in one-letter code: Photosystem II CP43 reaction center protein (461 aa).

The propeptide occupies Met1–Glu2. Residue Thr3 is modified to N-acetylthreonine. A Phosphothreonine modification is found at Thr3. The next 5 helical transmembrane spans lie at Leu57–Ala81, Leu122–Asn143, Lys166–Thr188, Lys243–Ser263, and Trp279–Ala300. A [CaMn4O5] cluster-binding site is contributed by Glu355. The chain crosses the membrane as a helical span at residues Arg435–Pro459.

Belongs to the PsbB/PsbC family. PsbC subfamily. In terms of assembly, PSII is composed of 1 copy each of membrane proteins PsbA, PsbB, PsbC, PsbD, PsbE, PsbF, PsbH, PsbI, PsbJ, PsbK, PsbL, PsbM, PsbT, PsbX, PsbY, PsbZ, Psb30/Ycf12, at least 3 peripheral proteins of the oxygen-evolving complex and a large number of cofactors. It forms dimeric complexes. Binds multiple chlorophylls and provides some of the ligands for the Ca-4Mn-5O cluster of the oxygen-evolving complex. It may also provide a ligand for a Cl- that is required for oxygen evolution. PSII binds additional chlorophylls, carotenoids and specific lipids. is required as a cofactor.

It localises to the plastid. The protein resides in the chloroplast thylakoid membrane. Its function is as follows. One of the components of the core complex of photosystem II (PSII). It binds chlorophyll and helps catalyze the primary light-induced photochemical processes of PSII. PSII is a light-driven water:plastoquinone oxidoreductase, using light energy to abstract electrons from H(2)O, generating O(2) and a proton gradient subsequently used for ATP formation. This chain is Photosystem II CP43 reaction center protein, found in Nandina domestica (Heavenly bamboo).